The primary structure comprises 99 residues: Aspartyl/glutamyl-tRNA(Asn/Gln) amidotransferase subunit C (99 aa).

It belongs to the GatC family. As to quaternary structure, heterotrimer of A, B and C subunits.

The catalysed reaction is L-glutamyl-tRNA(Gln) + L-glutamine + ATP + H2O = L-glutaminyl-tRNA(Gln) + L-glutamate + ADP + phosphate + H(+). The enzyme catalyses L-aspartyl-tRNA(Asn) + L-glutamine + ATP + H2O = L-asparaginyl-tRNA(Asn) + L-glutamate + ADP + phosphate + 2 H(+). Its function is as follows. Allows the formation of correctly charged Asn-tRNA(Asn) or Gln-tRNA(Gln) through the transamidation of misacylated Asp-tRNA(Asn) or Glu-tRNA(Gln) in organisms which lack either or both of asparaginyl-tRNA or glutaminyl-tRNA synthetases. The reaction takes place in the presence of glutamine and ATP through an activated phospho-Asp-tRNA(Asn) or phospho-Glu-tRNA(Gln). In Paraburkholderia phytofirmans (strain DSM 17436 / LMG 22146 / PsJN) (Burkholderia phytofirmans), this protein is Aspartyl/glutamyl-tRNA(Asn/Gln) amidotransferase subunit C.